Reading from the N-terminus, the 415-residue chain is Serine hydroxymethyltransferase (415 aa).

(6S)-5,6,7,8-tetrahydrofolate is bound by residues Leu-117 and 121–123; that span reads GHL. Lys-226 is modified (N6-(pyridoxal phosphate)lysine).

Belongs to the SHMT family. Homodimer. Pyridoxal 5'-phosphate serves as cofactor.

The protein resides in the cytoplasm. It catalyses the reaction (6R)-5,10-methylene-5,6,7,8-tetrahydrofolate + glycine + H2O = (6S)-5,6,7,8-tetrahydrofolate + L-serine. It participates in one-carbon metabolism; tetrahydrofolate interconversion. Its pathway is amino-acid biosynthesis; glycine biosynthesis; glycine from L-serine: step 1/1. Functionally, catalyzes the reversible interconversion of serine and glycine with tetrahydrofolate (THF) serving as the one-carbon carrier. This reaction serves as the major source of one-carbon groups required for the biosynthesis of purines, thymidylate, methionine, and other important biomolecules. Also exhibits THF-independent aldolase activity toward beta-hydroxyamino acids, producing glycine and aldehydes, via a retro-aldol mechanism. The chain is Serine hydroxymethyltransferase from Dehalococcoides mccartyi (strain CBDB1).